Here is a 196-residue protein sequence, read N- to C-terminus: Adenylyl-sulfate kinase (196 aa).

An ATP-binding site is contributed by 31–38 (GLSGAGKS). The active-site Phosphoserine intermediate is serine 105.

It belongs to the APS kinase family.

It carries out the reaction adenosine 5'-phosphosulfate + ATP = 3'-phosphoadenylyl sulfate + ADP + H(+). It functions in the pathway sulfur metabolism; hydrogen sulfide biosynthesis; sulfite from sulfate: step 2/3. Its function is as follows. Catalyzes the synthesis of activated sulfate. The chain is Adenylyl-sulfate kinase from Aeromonas salmonicida (strain A449).